The sequence spans 118 residues: Fluoride-specific ion channel FluC 1 (118 aa).

2 consecutive transmembrane segments (helical) span residues Met-1–Val-21 and Phe-29–Gly-49. Na(+)-binding residues include Gly-71 and Thr-74. The chain crosses the membrane as a helical span at residues Leu-95–Tyr-115.

This sequence belongs to the fluoride channel Fluc/FEX (TC 1.A.43) family.

It is found in the cell membrane. The enzyme catalyses fluoride(in) = fluoride(out). Its activity is regulated as follows. Na(+) is not transported, but it plays an essential structural role and its presence is essential for fluoride channel function. Its function is as follows. Fluoride-specific ion channel. Important for reducing fluoride concentration in the cell, thus reducing its toxicity. The polypeptide is Fluoride-specific ion channel FluC 1 (Staphylococcus saprophyticus subsp. saprophyticus (strain ATCC 15305 / DSM 20229 / NCIMB 8711 / NCTC 7292 / S-41)).